Here is a 186-residue protein sequence, read N- to C-terminus: MGIDHTSKQHKRSGHRTAPKSDNVYLKLLVKLYTFLARRTDAPFNKVVLKALFLSKINRPPVSVSRIARALKQEGAANKTVVVVGTVTDDARIFEFPKTTVAALRFTAGARAKIVKAGGECITLDQLAVRAPKGQNTLILRGPRNSREAVRHFGMGPHKGKAPRILSTGRKFERARGRRRSKGFKV.

Lys-50 carries the post-translational modification N6,N6,N6-trimethyllysine. Lys-116 is covalently cross-linked (Glycyl lysine isopeptide (Lys-Gly) (interchain with G-Cter in ubiquitin)).

The protein belongs to the eukaryotic ribosomal protein eL18 family. Component of the large ribosomal subunit (LSU). Mature yeast ribosomes consist of a small (40S) and a large (60S) subunit. The 40S small subunit contains 1 molecule of ribosomal RNA (18S rRNA) and 33 different proteins (encoded by 57 genes). The large 60S subunit contains 3 rRNA molecules (25S, 5.8S and 5S rRNA) and 46 different proteins (encoded by 81 genes). eL18 interacts with NAP1.

It localises to the cytoplasm. Functionally, component of the ribosome, a large ribonucleoprotein complex responsible for the synthesis of proteins in the cell. The small ribosomal subunit (SSU) binds messenger RNAs (mRNAs) and translates the encoded message by selecting cognate aminoacyl-transfer RNA (tRNA) molecules. The large subunit (LSU) contains the ribosomal catalytic site termed the peptidyl transferase center (PTC), which catalyzes the formation of peptide bonds, thereby polymerizing the amino acids delivered by tRNAs into a polypeptide chain. The nascent polypeptides leave the ribosome through a tunnel in the LSU and interact with protein factors that function in enzymatic processing, targeting, and the membrane insertion of nascent chains at the exit of the ribosomal tunnel. The polypeptide is Large ribosomal subunit protein eL18B (Saccharomyces cerevisiae (strain ATCC 204508 / S288c) (Baker's yeast)).